The primary structure comprises 2185 residues: DNA polymerase epsilon catalytic subunit A (2185 aa).

Cys2072, Cys2075, Cys2094, and Cys2097 together coordinate Zn(2+). The segment at Cys2072–Cys2097 adopts a CysA-type zinc-finger fold. Positions 2128, 2131, 2143, and 2145 each coordinate [4Fe-4S] cluster. A CysB motif motif is present at residues Cys2128–Cys2145.

Belongs to the DNA polymerase type-B family. Heterotetramer. Consists of 4 subunits: POL2, DPB2, DPB3 and DPB4. Requires [4Fe-4S] cluster as cofactor.

The protein resides in the nucleus. The catalysed reaction is DNA(n) + a 2'-deoxyribonucleoside 5'-triphosphate = DNA(n+1) + diphosphate. DNA polymerase II participates in chromosomal DNA replication. The chain is DNA polymerase epsilon catalytic subunit A (POL2) from Kluyveromyces lactis (strain ATCC 8585 / CBS 2359 / DSM 70799 / NBRC 1267 / NRRL Y-1140 / WM37) (Yeast).